Consider the following 408-residue polypeptide: CinA-like protein (408 aa).

It belongs to the CinA family.

The polypeptide is CinA-like protein (Anaeromyxobacter dehalogenans (strain 2CP-1 / ATCC BAA-258)).